The chain runs to 469 residues: MTRPVRTRFAPSPTGFIHLGNIRSALYPWAFARKMKGTFVLRIEDTDVERSSKEAVDAILEGMEWLGLDFDEGPIYQMQRMDRYREVLAQMLEKGLAYPCYMSAEELDALRERQRAAGLKPRYDGTWRPEPGKVLPEPPPGVKPVLRFRNPLTGTVAWDDAVKGRVEISNEELDDLVIARPDGTPIYNFCVVVDDMDMGITHVIRGDDHVNNTPRQINILRALGGEPPVYAHLPTVLNEQGEKMSKRHGAMSVMAYRDAGYLPEAVVNYLARLGWSHGDAEIFSREQFVEWFDLEHLGKSPAQYDHNKLNWLNAHYIKEADNARLAALAKPFLAALAIDDAALAAGPALEAVIALMKDRATTVKEIAEGAAMFYRVPAPDADALAQHVSDAVRPALADLAAALKAADWTKEAISAALKATLAAHKLKMPQLAMPVRLLVAGTTHTPSIDAVLALFDRDVVVSRIEAALA.

Positions P11–N21 match the 'HIGH' region motif. A compositionally biased stretch (basic and acidic residues) spans P121–P131. The interval P121–G141 is disordered. The 'KMSKS' region signature appears at K243–R247. K246 is a binding site for ATP.

Belongs to the class-I aminoacyl-tRNA synthetase family. Glutamate--tRNA ligase type 1 subfamily. Monomer.

It localises to the cytoplasm. The enzyme catalyses tRNA(Glu) + L-glutamate + ATP = L-glutamyl-tRNA(Glu) + AMP + diphosphate. Its function is as follows. Catalyzes the attachment of glutamate to tRNA(Glu) in a two-step reaction: glutamate is first activated by ATP to form Glu-AMP and then transferred to the acceptor end of tRNA(Glu). This Burkholderia multivorans (strain ATCC 17616 / 249) protein is Glutamate--tRNA ligase.